The sequence spans 218 residues: Nonsense-mediated decay protein 4 (218 aa).

It is found in the cytoplasm. Functionally, involved in nonsense-mediated decay of mRNAs containing premature stop codons. The polypeptide is Nonsense-mediated decay protein 4 (NMD4) (Saccharomyces cerevisiae (strain ATCC 204508 / S288c) (Baker's yeast)).